Consider the following 706-residue polypeptide: Elongation factor G (706 aa).

The region spanning 15–291 (LKTRNIGISA…GVLDYLASPV (277 aa)) is the tr-type G domain. Residues 24–31 (AHIDSGKT), 91–95 (DTPGH), and 145–148 (NKLD) each bind GTP.

It belongs to the TRAFAC class translation factor GTPase superfamily. Classic translation factor GTPase family. EF-G/EF-2 subfamily.

It localises to the cytoplasm. In terms of biological role, catalyzes the GTP-dependent ribosomal translocation step during translation elongation. During this step, the ribosome changes from the pre-translocational (PRE) to the post-translocational (POST) state as the newly formed A-site-bound peptidyl-tRNA and P-site-bound deacylated tRNA move to the P and E sites, respectively. Catalyzes the coordinated movement of the two tRNA molecules, the mRNA and conformational changes in the ribosome. This chain is Elongation factor G, found in Leptospira borgpetersenii serovar Hardjo-bovis (strain JB197).